The sequence spans 233 residues: MRKPDGKIVLLGDMNVGKTSLLQRYMERRFPDTVSTVGGAFYLKQWRSFNISIWDTAGREQFHGLGSLYCRGAAAIILTYDVNHPQSLFELEDRFLGLTETANNDCLFAIVGNKVDLTSERDTEGGEKEGPASGKVGSCVSTKVPKQVQPEDAVALYKKILKYKMLDEREMPAAEQMCFETSAKTGYNVDLLFETLFDLVVPMIMRQRAEESDQTVDIASCKTPKQTRSGCCA.

GTP is bound by residues Gly17, Lys18, Thr19, Asp32, and Thr36. Thr19 serves as a coordination point for Mg(2+). 2 consecutive short sequence motifs (switch) follow at residues Arg28–Phe41 and Asp55–Gly72. Residues Thr36 and Asp55 each contribute to the Mg(2+) site. Positions 58, 113, 114, and 116 each coordinate GTP. Over residues Ser119–Gly130 the composition is skewed to basic and acidic residues. The tract at residues Ser119–Ser138 is disordered. The GTP site is built by Ala183 and Lys184. Residues Cys231 and Cys232 are each lipidated (S-geranylgeranyl cysteine).

The protein belongs to the small GTPase superfamily. Rab family. Requires Mg(2+) as cofactor. Present in a variety of tissues, but not in brain.

It is found in the cytoplasmic vesicle. The protein resides in the phagosome. Its subcellular location is the phagosome membrane. The protein localises to the golgi apparatus. The enzyme catalyses GTP + H2O = GDP + phosphate + H(+). Regulated by guanine nucleotide exchange factors (GEFs) which promote the exchange of bound GDP for free GTP. Regulated by GTPase activating proteins (GAPs) which increase the GTP hydrolysis activity. Inhibited by GDP dissociation inhibitors (GDIs). Functionally, plays a role in apical endocytosis/recycling. Plays a role in the maturation and acidification of phagosomes that engulf pathogens, such as S.aureus and Mycobacterium. Plays a role in the fusion of phagosomes with lysosomes. The sequence is that of Ras-related protein Rab-20 from Mus musculus (Mouse).